The following is a 232-amino-acid chain: Uracil-DNA glycosylase (232 aa).

The active-site Proton acceptor is Asp-70.

The protein belongs to the uracil-DNA glycosylase (UDG) superfamily. UNG family.

The protein localises to the cytoplasm. It carries out the reaction Hydrolyzes single-stranded DNA or mismatched double-stranded DNA and polynucleotides, releasing free uracil.. Functionally, excises uracil residues from the DNA which can arise as a result of misincorporation of dUMP residues by DNA polymerase or due to deamination of cytosine. This Campylobacter fetus subsp. fetus (strain 82-40) protein is Uracil-DNA glycosylase.